Consider the following 1017-residue polypeptide: A-type ATP synthase subunit A (1017 aa).

The DOD-type homing endonuclease domain occupies 396–529 (FLGYLIADGT…FSYLLAKLGI (134 aa)).

The protein belongs to the ATPase alpha/beta chains family. As to quaternary structure, has multiple subunits with at least A(3), B(3), C, D, E, F, H, I and proteolipid K(x). In terms of processing, this protein undergoes a protein self splicing that involves a post-translational excision of the VDE intervening region (intein) followed by peptide ligation.

It localises to the cell membrane. The catalysed reaction is ATP + H2O + 4 H(+)(in) = ADP + phosphate + 5 H(+)(out). In terms of biological role, component of the A-type ATP synthase that produces ATP from ADP in the presence of a proton gradient across the membrane. The A chain is the catalytic subunit. The sequence is that of A-type ATP synthase subunit A from Pyrococcus abyssi (strain GE5 / Orsay).